Consider the following 608-residue polypeptide: AAA ATPase forming ring-shaped complexes (608 aa).

Residues 45–79 (AQEYDAVLRRLSAAEATRDNMSRQIRGAGEKNRKL) are a coiled coil. Position 302 to 307 (302 to 307 (GNGKTM)) interacts with ATP.

It belongs to the AAA ATPase family. Homohexamer. Assembles into a hexameric ring structure.

This is AAA ATPase forming ring-shaped complexes from Rothia mucilaginosa (strain DY-18) (Stomatococcus mucilaginosus).